Consider the following 351-residue polypeptide: MESSFQELYKKGLDIGEQQKQRQKELLKQQKLRRQQEQDDYRPLQNQEKPVPRKKSGKRSGHQKGIPYRPQLSEWLRHKPDDLNEWLLVPCPVGKRCLVVASKGITKAYSKGGWMFVNFRSSLPGDWQLQKGETILDCVYVEDADTFYVLDAISFGLQEVQECEASFRFYWLRARFEEHDYDKISENNEKKFKLLDHFDFEDPSAVEQALHKYPFFPENKPDLDGFLFYHKEASYVCRETPLVCWLFPFMMEDVLGLPVNKCYKAPEDYQPSHVLQYMDAFEQKLAEHRRTLKEQKKKVNEQKEDPHTMEAEEDVESDEYDSLKRVLDQQRRLELGEFDMDCAEPPSADGC.

Disordered regions lie at residues 1–66 (MESS…QKGI) and 294–322 (EQKK…EYDS). A compositionally biased stretch (basic and acidic residues) spans 8-42 (LYKKGLDIGEQQKQRQKELLKQQKLRRQQEQDDYR). A compositionally biased stretch (basic residues) spans 52-62 (PRKKSGKRSGH). The stretch at 274-330 (VLQYMDAFEQKLAEHRRTLKEQKKKVNEQKEDPHTMEAEEDVESDEYDSLKRVLDQQ) forms a coiled coil. The span at 294-310 (EQKKKVNEQKEDPHTME) shows a compositional bias: basic and acidic residues. Acidic residues predominate over residues 311 to 320 (AEEDVESDEY).

This sequence belongs to the snurportin family. In terms of assembly, interacts with components of the snRNP complex including SmB and Smn; these interactions are RNA-dependent. Interacts with importin-7 msk but not with importin subunit beta Fs(2)Ket; the interaction is RNA-dependent.

The protein resides in the nucleus. It localises to the cytoplasm. The protein localises to the U-body. It is found in the nucleus speckle. Its subcellular location is the cajal body. Its function is as follows. Functions as an U snRNP-specific nuclear import adapter. Involved in the trimethylguanosine (m3G)-cap-dependent nuclear import of U snRNPs. Binds specifically to the terminal m3G-cap U snRNAs. In Drosophila melanogaster (Fruit fly), this protein is Snurportin-1.